A 239-amino-acid polypeptide reads, in one-letter code: Lactate utilization protein A (239 aa).

Belongs to the LutA/YkgE family.

In terms of biological role, is involved in L-lactate degradation and allows cells to grow with lactate as the sole carbon source. The polypeptide is Lactate utilization protein A (Geobacillus kaustophilus (strain HTA426)).